The chain runs to 494 residues: Beta-glucosidase 29 (494 aa).

Residues Met1 to Ala28 form the signal peptide. Position 49 (Gln49) interacts with a beta-D-glucoside. Residue Asn103 is glycosylated (N-linked (GlcNAc...) asparagine). Residues His138 and Asn183 to Glu184 each bind a beta-D-glucoside. Catalysis depends on Glu184, which acts as the Proton donor. A disulfide bridge links Cys203 with Cys211. Asn263 is a glycosylation site (N-linked (GlcNAc...) asparagine). An a beta-D-glucoside-binding site is contributed by Tyr327. Residue Asn352 is glycosylated (N-linked (GlcNAc...) asparagine). Glu398 serves as a coordination point for a beta-D-glucoside. Residue Glu398 is the Nucleophile of the active site. N-linked (GlcNAc...) asparagine glycosylation occurs at Asn406. A beta-D-glucoside-binding positions include Trp447, Glu454–Trp455, and Phe463.

It belongs to the glycosyl hydrolase 1 family.

It catalyses the reaction Hydrolysis of terminal, non-reducing beta-D-glucosyl residues with release of beta-D-glucose.. The chain is Beta-glucosidase 29 (BGLU29) from Oryza sativa subsp. japonica (Rice).